Reading from the N-terminus, the 214-residue chain is Adenylate kinase (214 aa).

Residue 10–15 coordinates ATP; sequence GSGKGT. The segment at 30 to 59 is NMP; that stretch reads STGDMLRAAVREGTPLGMEAKKIMDAGQLV. Residues threonine 31, arginine 36, 57-59, 85-88, and glutamine 92 each bind AMP; these read QLV and GFPR. The tract at residues 122-159 is LID; the sequence is GRRVHPASGRTYHVVFNPPKVEGRDDETGEPLVQREDD. ATP is bound by residues arginine 123 and 132 to 133; that span reads TY. Positions 156 and 167 each coordinate AMP. ATP is bound at residue glycine 200.

The protein belongs to the adenylate kinase family. In terms of assembly, monomer.

The protein resides in the cytoplasm. It catalyses the reaction AMP + ATP = 2 ADP. The protein operates within purine metabolism; AMP biosynthesis via salvage pathway; AMP from ADP: step 1/1. Its function is as follows. Catalyzes the reversible transfer of the terminal phosphate group between ATP and AMP. Plays an important role in cellular energy homeostasis and in adenine nucleotide metabolism. In Methylococcus capsulatus (strain ATCC 33009 / NCIMB 11132 / Bath), this protein is Adenylate kinase.